The chain runs to 329 residues: NADH-quinone oxidoreductase subunit H (329 aa).

A run of 9 helical transmembrane segments spans residues 9 to 29, 42 to 62, 75 to 95, 117 to 137, 154 to 174, 188 to 208, 238 to 258, 260 to 280, and 309 to 329; these read LIKI…ATYI, GPCY…IKLF, FIFT…MAPI, IGFL…ILAG, IQLL…LMVV, GGFL…FLIA, LKWG…SFVI, IVFF…AILI, and WKIM…IILI.

This sequence belongs to the complex I subunit 1 family. As to quaternary structure, NDH-1 is composed of 14 different subunits. Subunits NuoA, H, J, K, L, M, N constitute the membrane sector of the complex.

The protein localises to the cell inner membrane. It carries out the reaction a quinone + NADH + 5 H(+)(in) = a quinol + NAD(+) + 4 H(+)(out). Its function is as follows. NDH-1 shuttles electrons from NADH, via FMN and iron-sulfur (Fe-S) centers, to quinones in the respiratory chain. The immediate electron acceptor for the enzyme in this species is believed to be ubiquinone. Couples the redox reaction to proton translocation (for every two electrons transferred, four hydrogen ions are translocated across the cytoplasmic membrane), and thus conserves the redox energy in a proton gradient. This subunit may bind ubiquinone. The polypeptide is NADH-quinone oxidoreductase subunit H (Helicobacter pylori (strain G27)).